Reading from the N-terminus, the 418-residue chain is Glutamyl-tRNA reductase (418 aa).

Substrate is bound by residues 49–52 (TCNR), S107, 112–114 (EPQ), and Q118. C50 serves as the catalytic Nucleophile. Position 187 to 192 (187 to 192 (GAGETI)) interacts with NADP(+).

It belongs to the glutamyl-tRNA reductase family. Homodimer.

It carries out the reaction (S)-4-amino-5-oxopentanoate + tRNA(Glu) + NADP(+) = L-glutamyl-tRNA(Glu) + NADPH + H(+). It functions in the pathway porphyrin-containing compound metabolism; protoporphyrin-IX biosynthesis; 5-aminolevulinate from L-glutamyl-tRNA(Glu): step 1/2. In terms of biological role, catalyzes the NADPH-dependent reduction of glutamyl-tRNA(Glu) to glutamate 1-semialdehyde (GSA). In Vibrio campbellii (strain ATCC BAA-1116), this protein is Glutamyl-tRNA reductase.